A 599-amino-acid polypeptide reads, in one-letter code: uncharacterized protein (599 aa).

49 to 56 is an ATP binding site; that stretch reads GPPGSGKT. In terms of domain architecture, Macro spans 416–599; sequence AEVRKELEYK…TKIFEEKFSV (184 aa).

In the N-terminal section; belongs to the AAA ATPase family. RarA/MGS1/WRNIP1 subfamily.

This is an uncharacterized protein from Thermotoga maritima (strain ATCC 43589 / DSM 3109 / JCM 10099 / NBRC 100826 / MSB8).